We begin with the raw amino-acid sequence, 138 residues long: Actin-related protein 2/3 complex subunit 5 (138 aa).

Positions 1–21 (MNYEDDNVESGQAGKSDAEYK) are disordered.

Belongs to the ARPC5 family. As to quaternary structure, component of the Arp2/3 complex composed of arpB/Arp2, arpC/Arp3, arcA/p41-arc, arcB/p34-arc, arcC/p21-arc, arcD/p20-arc and arcE/p16-arc. Interacts with carmil (via the region between the LRR domain and COOH-terminal proline-rich domain); carmil is required for Arp2/3-dependent actin nucleation. Arp2/3 complex, MyoB, MyoC, and the alpha and beta subunits of capping protein all form a larger complex with carmil.

It is found in the cytoplasm. The protein localises to the cytoskeleton. Its subcellular location is the cytosol. It localises to the cell cortex. The protein resides in the cell projection. It is found in the pseudopodium. In terms of biological role, functions as a component of the Arp2/3 complex which is involved in regulation of actin polymerization and together with an activating nucleation-promoting factor (NPF) mediates the formation of branched actin networks. Seems to contact the pointed end of the daughter actin filament. The Arp2/3 complex is involved in organizing the actin system in cell motility and chemotaxis, in phagocytosis and macropinocytosis, at late steps of endosome processing, and in mitosis. In concert with a group of other proteins, the Arp2/3 complex plays a general role in the rapid activation and adaptation of the actin system to its multiple functions. The chain is Actin-related protein 2/3 complex subunit 5 (arcE) from Dictyostelium discoideum (Social amoeba).